The sequence spans 404 residues: MPMNVETRETKKVLNHLPSEETVEKTLKRLQTFSGDQSVVVGLSGGVDSSLTAALLCKAGWDVEGLTLWLMKGKGSCCSDGLVDAAGICDQLGIKHHIVDSKEIFQKEIINNVLKGYEEGITPLPCSRCNKSVKFSEMLKWVKENKNIEKIATGHYARIRYSNESFNENDLPSNGIKRHKLLRGKDLNKDQSYFLYDLPQEILGRTIFPLGELTKEITRIEALKHSLKTAKKPESQDLCLAEHYGSMNAFIDKYLPQKKGEVVLKSGQIIGSHNGIQHFTIGQRKGLGIAWEVPLHVVEIDASLNRVIVAPREDSGKSECIVKDINWVSIEAPQEPIKVEVQIRYRSKAVKAKLIPIFDSNKENYCYQCHIHFEEDQFSITPGQAAVFYMGDYVLGGGLISKEY.

Residues Gly42–Ser49 and Leu68 each bind ATP. The active-site Nucleophile is Cys129. The cysteines at positions 129 and 239 are disulfide-linked. Gly154 is a binding site for ATP. Positions Lys189–Gln191 are interaction with tRNA. Catalysis depends on Cys239, which acts as the Cysteine persulfide intermediate. The interval Arg344 to Tyr345 is interaction with tRNA.

Belongs to the MnmA/TRMU family.

The protein resides in the cytoplasm. It carries out the reaction S-sulfanyl-L-cysteinyl-[protein] + uridine(34) in tRNA + AH2 + ATP = 2-thiouridine(34) in tRNA + L-cysteinyl-[protein] + A + AMP + diphosphate + H(+). In terms of biological role, catalyzes the 2-thiolation of uridine at the wobble position (U34) of tRNA, leading to the formation of s(2)U34. The protein is tRNA-specific 2-thiouridylase MnmA of Prochlorococcus marinus (strain NATL1A).